The sequence spans 110 residues: UPF0122 protein BcerKBAB4_3669 (110 aa).

This sequence belongs to the UPF0122 family.

Might take part in the signal recognition particle (SRP) pathway. This is inferred from the conservation of its genetic proximity to ftsY/ffh. May be a regulatory protein. The sequence is that of UPF0122 protein BcerKBAB4_3669 from Bacillus mycoides (strain KBAB4) (Bacillus weihenstephanensis).